A 572-amino-acid chain; its full sequence is RNA polymerase sigma factor sigB (572 aa).

The N-terminal 39 residues, 1 to 39 (MSSCLLPQFKCPPDSFSIHFRTSFCAPKHNKGSVFFQPQ), are a transit peptide targeting the chloroplast. The segment at 215-249 (TRQTERKARRAKGLEKTASGIPSVKTGSSPKKKRL) is disordered. Positions 360–373 (DLVQEGCRGLVRGA) match the Polymerase core binding motif. A DNA-binding region (H-T-H motif) is located at residues 530–549 (LQEIGEMMGVSRERVRQIES).

The protein belongs to the sigma-70 factor family. As to expression, highly expressed in cotyledons, to a lesser extent in leaves, sepals and siliques, and barely expressed in roots. Present in seedlings.

The protein localises to the plastid. It is found in the chloroplast. Its function is as follows. Required for the transition of plastids into chloroplasts by coordinating nuclear and chloroplastic genomes under light conditions. Sigma factors are initiation factors that promote the attachment of plastid-encoded RNA polymerase (PEP) to specific initiation sites and are then released. Promotes the biosynthesis of plastid-encoded tRNAs (e.g. trnE-UUC and trnV-UAC). This chain is RNA polymerase sigma factor sigB (SIGB), found in Arabidopsis thaliana (Mouse-ear cress).